The following is a 141-amino-acid chain: Large ribosomal subunit protein uL11 (141 aa).

The protein belongs to the universal ribosomal protein uL11 family. In terms of assembly, part of the ribosomal stalk of the 50S ribosomal subunit. Interacts with L10 and the large rRNA to form the base of the stalk. L10 forms an elongated spine to which L12 dimers bind in a sequential fashion forming a multimeric L10(L12)X complex. Post-translationally, one or more lysine residues are methylated.

Forms part of the ribosomal stalk which helps the ribosome interact with GTP-bound translation factors. The sequence is that of Large ribosomal subunit protein uL11 from Limosilactobacillus reuteri (strain DSM 20016) (Lactobacillus reuteri).